Reading from the N-terminus, the 223-residue chain is Ribonuclease T (223 aa).

The region spanning 20–194 (VVIDVETAGF…YDTERTAELF (175 aa)) is the Exonuclease domain. Positions 23, 25, 181, and 186 each coordinate Mg(2+). His-181 functions as the Proton donor/acceptor in the catalytic mechanism.

This sequence belongs to the RNase T family. Homodimer. Requires Mg(2+) as cofactor.

Its function is as follows. Trims short 3' overhangs of a variety of RNA species, leaving a one or two nucleotide 3' overhang. Responsible for the end-turnover of tRNA: specifically removes the terminal AMP residue from uncharged tRNA (tRNA-C-C-A). Also appears to be involved in tRNA biosynthesis. In Shewanella baltica (strain OS155 / ATCC BAA-1091), this protein is Ribonuclease T.